Here is a 2234-residue protein sequence, read N- to C-terminus: Bridge-like lipid transfer protein family member 2 (2234 aa).

Residues 1-31 (MPLFLSALLVLLLVALSALFLGRWLVVRLAT) form the signal peptide. Residues 29–108 (LATRWCQRKL…LQKVSSLSAP (80 aa)) are transmembrane domain. Serine 563 is subject to Phosphoserine. The tract at residues 1496-1529 (QMSAKKPKRGIPPSAQVPPHVSTPSFSGRPDKGS) is disordered. Residues 1814–1885 (ILHLQEAVRQ…LNILIRCFKD (72 aa)) are a coiled coil. Residues serine 1846 and serine 2090 each carry the phosphoserine modification.

It belongs to the SABRE family.

It is found in the cell membrane. Its subcellular location is the endoplasmic reticulum membrane. It localises to the mitochondrion membrane. Its function is as follows. Tube-forming lipid transport protein which binds to phosphatidylinositols and affects phosphatidylinositol-4,5-bisphosphate (PtdIns-4,5-P2) distribution. This is Bridge-like lipid transfer protein family member 2 (Bltp2) from Mus musculus (Mouse).